The following is a 48-amino-acid chain: Large ribosomal subunit protein bL34 (48 aa).

The protein belongs to the bacterial ribosomal protein bL34 family.

This Mycoplasma genitalium (strain ATCC 33530 / DSM 19775 / NCTC 10195 / G37) (Mycoplasmoides genitalium) protein is Large ribosomal subunit protein bL34 (rpmH).